The following is an 87-amino-acid chain: RNA-binding protein Hfq (87 aa).

The 60-residue stretch at 9-68 (DPFLNALRRERIPVSIYLVNGIKLQGQIESFDQFVILLKNTVSQMVYKHAISTVVPARAV) folds into the Sm domain.

This sequence belongs to the Hfq family. In terms of assembly, homohexamer.

Functionally, RNA chaperone that binds small regulatory RNA (sRNAs) and mRNAs to facilitate mRNA translational regulation in response to envelope stress, environmental stress and changes in metabolite concentrations. Also binds with high specificity to tRNAs. The polypeptide is RNA-binding protein Hfq (Aeromonas salmonicida (strain A449)).